We begin with the raw amino-acid sequence, 365 residues long: Fructose-1,6-bisphosphate aldolase/phosphatase (365 aa).

Residue aspartate 11 is the Proton acceptor; for FBP phosphatase activity of the active site. 4 residues coordinate Mg(2+): aspartate 11, histidine 18, aspartate 52, and aspartate 53. Histidine 18 contacts beta-D-fructose 1,6-bisphosphate. A dihydroxyacetone phosphate-binding site is contributed by histidine 18. Beta-D-fructose 1,6-bisphosphate is bound at residue tyrosine 90. Glutamine 94 lines the Mg(2+) pocket. 103–104 serves as a coordination point for beta-D-fructose 1,6-bisphosphate; it reads GN. Aspartate 131 serves as a coordination point for Mg(2+). Lysine 132 serves as a coordination point for beta-D-fructose 1,6-bisphosphate. Lysine 132 contacts dihydroxyacetone phosphate. The Proton donor/acceptor; for FBP aldolase activity role is filled by tyrosine 228. Positions 231, 232, and 233 each coordinate Mg(2+). Lysine 231 functions as the Schiff-base intermediate with DHAP; for FBP aldolase activity in the catalytic mechanism. Beta-D-fructose 1,6-bisphosphate contacts are provided by residues 241–242, arginine 265, aspartate 286, and tyrosine 347; that span reads QS. Dihydroxyacetone phosphate is bound by residues arginine 265 and aspartate 286.

Belongs to the FBP aldolase/phosphatase family. As to quaternary structure, homooctamer; dimer of tetramers. The cofactor is Mg(2+).

The enzyme catalyses beta-D-fructose 1,6-bisphosphate + H2O = beta-D-fructose 6-phosphate + phosphate. It carries out the reaction beta-D-fructose 1,6-bisphosphate = D-glyceraldehyde 3-phosphate + dihydroxyacetone phosphate. Its pathway is carbohydrate biosynthesis; gluconeogenesis. In terms of biological role, catalyzes two subsequent steps in gluconeogenesis: the aldol condensation of dihydroxyacetone phosphate (DHAP) and glyceraldehyde-3-phosphate (GA3P) to fructose-1,6-bisphosphate (FBP), and the dephosphorylation of FBP to fructose-6-phosphate (F6P). This is Fructose-1,6-bisphosphate aldolase/phosphatase from Methanothermobacter marburgensis (strain ATCC BAA-927 / DSM 2133 / JCM 14651 / NBRC 100331 / OCM 82 / Marburg) (Methanobacterium thermoautotrophicum).